We begin with the raw amino-acid sequence, 503 residues long: ATP synthase subunit alpha (503 aa).

Gly170–Thr177 is an ATP binding site.

It belongs to the ATPase alpha/beta chains family. As to quaternary structure, F-type ATPases have 2 components, CF(1) - the catalytic core - and CF(0) - the membrane proton channel. CF(1) has five subunits: alpha(3), beta(3), gamma(1), delta(1), epsilon(1). CF(0) has three main subunits: a(1), b(2) and c(9-12). The alpha and beta chains form an alternating ring which encloses part of the gamma chain. CF(1) is attached to CF(0) by a central stalk formed by the gamma and epsilon chains, while a peripheral stalk is formed by the delta and b chains.

It localises to the cell inner membrane. The catalysed reaction is ATP + H2O + 4 H(+)(in) = ADP + phosphate + 5 H(+)(out). Its function is as follows. Produces ATP from ADP in the presence of a proton gradient across the membrane. The alpha chain is a regulatory subunit. The polypeptide is ATP synthase subunit alpha (Helicobacter acinonychis (strain Sheeba)).